The following is a 234-amino-acid chain: Ribonuclease HII (234 aa).

An RNase H type-2 domain is found at 47-234 (IRIAGVDEVG…KTVHKILYQE (188 aa)). The a divalent metal cation site is built by Asp53, Glu54, and Asp144.

Belongs to the RNase HII family. Mn(2+) is required as a cofactor. It depends on Mg(2+) as a cofactor.

The protein localises to the cytoplasm. It carries out the reaction Endonucleolytic cleavage to 5'-phosphomonoester.. Functionally, endonuclease that specifically degrades the RNA of RNA-DNA hybrids. In Ruegeria pomeroyi (strain ATCC 700808 / DSM 15171 / DSS-3) (Silicibacter pomeroyi), this protein is Ribonuclease HII.